Consider the following 679-residue polypeptide: Stress-70 protein, mitochondrial (679 aa).

The transit peptide at 1–46 (MISASRAAAARLVGTAASRSPAAARPQDGWNGLSHEAFRFVSRRDY) directs the protein to the mitochondrion. An interaction with NFS1 region spans residues 1–432 (MISASRAAAA…IQGGVLAGDV (432 aa)). The ADP site is built by Thr63 and Asn64. Residues 63-431 (TNSCVAVMEG…AIQGGVLAGD (369 aa)) are nucleotide-binding domain (NBD). Position 76 is an N6-acetyllysine (Lys76). At Thr87 the chain carries Phosphothreonine. N6-acetyllysine; alternate occurs at positions 135 and 138. N6-succinyllysine; alternate occurs at positions 135 and 138. Lys143 bears the N6-acetyllysine mark. At Lys206 the chain carries N6-acetyllysine; alternate. Position 206 is an N6-succinyllysine; alternate (Lys206). Lys206 is modified (N6-malonyllysine; alternate). Lys234 and Lys288 each carry N6-acetyllysine. Residue Lys300 is modified to N6-acetyllysine; alternate. An N6-succinyllysine; alternate modification is found at Lys300. The ADP site is built by Glu313, Lys316, and Ser320. Lys360 carries the N6-acetyllysine; alternate modification. Position 360 is an N6-succinyllysine; alternate (Lys360). Lys368 carries the N6-succinyllysine modification. Gly388 and Arg391 together coordinate ADP. Lys394 bears the N6-succinyllysine mark. Ser408 is modified (phosphoserine). The segment at 432–441 (VTDVLLLDVT) is interdomain linker. The tract at residues 432–679 (VTDVLLLDVT…QKEDQKEEKQ (248 aa)) is interaction with FXN and ISCU. Residues 442–679 (PLSLGIETLG…QKEDQKEEKQ (238 aa)) are substrate-binding domain (SBD). An Omega-N-methylarginine modification is found at Arg513. 2 positions are modified to N6-acetyllysine; alternate: Lys567 and Lys600. Residues Lys567 and Lys600 each carry the N6-succinyllysine; alternate modification. Lys610 is subject to N6-succinyllysine. Lys612 is subject to N6-acetyllysine. The residue at position 646 (Lys646) is an N6-acetyllysine; alternate. Lys646 is modified (N6-succinyllysine; alternate). The disordered stretch occupies residues 656–679 (ASEREGSGSSGTGEQKEDQKEEKQ). Basic and acidic residues predominate over residues 669–679 (EQKEDQKEEKQ).

Belongs to the heat shock protein 70 family. As to quaternary structure, interacts strongly with the intermediate form of FXN and weakly with its mature form. Interacts with HSCB. Associates with the mitochondrial contact site and cristae organizing system (MICOS) complex, composed of at least MICOS10/MIC10, CHCHD3/MIC19, CHCHD6/MIC25, APOOL/MIC27, IMMT/MIC60, APOO/MIC23/MIC26 and QIL1/MIC13. This complex was also known under the names MINOS or MitOS complex. The MICOS complex associates with mitochondrial outer membrane proteins SAMM50, MTX1, MTX2 and DNAJC11, mitochondrial inner membrane protein TMEM11 and with HSPA9. Interacts with DNLZ, the interaction is required to prevent self-aggregation. Interacts with TESPA1. Interacts with PDPN. Interacts with NFU1, NFS1 and ISCU. Interacts with TP53; the interaction promotes TP53 degradation. Interacts (via SBD domain) with UBXN2A; the interaction with UBXN2A inhibits HSPA9/MOT-2 interaction with and degradation of TP53, thereby promotes TP53 translocation to the nucleus. Interacts with ITPR1 AND VDAC1; this interaction couples ITPR1 to VDAC1. Component of the TIM23 mitochondrial inner membrane pre-sequence translocase complex.

It is found in the mitochondrion. Its subcellular location is the nucleus. The protein resides in the nucleolus. The protein localises to the cytoplasm. It localises to the mitochondrion matrix. It carries out the reaction ATP + H2O = ADP + phosphate + H(+). With respect to regulation, the chaperone activity is regulated by ATP-induced allosteric coupling of the nucleotide-binding (NBD) and substrate-binding (SBD) domains. ATP binding in the NBD leads to a conformational change in the NBD, which is transferred through the interdomain linker (IDL) to the substrate-binding domain (SBD). This elicits a reduced substrate affinity and a faster substrate exchange rate. Upon hydrolysis of ATP to ADP, the protein undergoes a conformational change that increases its affinity for substrate proteins. It cycles through repeated phases of ATP hydrolysis and nucleotide exchange, facilitating repeated cycles of substrate binding and release. Functions in collaboration with co-chaperones. Functions with the co-chaperone, DNLZ, to maintain solubility and regulate ATP hydrolysis. Nucleotide exchange factors, GRPEL1 and GRPEL2, accelerate nucleotide exchange. Mitochondrial chaperone that plays a key role in mitochondrial protein import, folding, and assembly. Plays an essential role in the protein quality control system, the correct folding of proteins, the re-folding of misfolded proteins, and the targeting of proteins for subsequent degradation. These processes are achieved through cycles of ATP binding, ATP hydrolysis, and ADP release, mediated by co-chaperones. In mitochondria, it associates with the TIM (translocase of the inner membrane) protein complex to assist in the import and folding of mitochondrial proteins. Plays an important role in mitochondrial iron-sulfur cluster (ISC) biogenesis. Interacts with and stabilizes ISC cluster assembly proteins FXN, NFU1, NFS1 and ISCU. Regulates erythropoiesis via stabilization of ISC assembly. Regulates mitochondrial calcium-dependent apoptosis by coupling two calcium channels, ITPR1 and VDAC1, at the mitochondria-associated endoplasmic reticulum (ER) membrane to facilitate calcium transport from the ER lumen to the mitochondria intermembrane space, providing calcium for the downstream calcium channel MCU, which releases it into the mitochondrial matrix. Although primarily located in the mitochondria, it is also found in other cellular compartments. In the cytosol, it associates with proteins involved in signaling, apoptosis, or senescence. It may play a role in cell cycle regulation via its interaction with and promotion of degradation of TP53. May play a role in the control of cell proliferation and cellular aging. Protects against reactive oxygen species (ROS). Extracellular HSPA9 plays a cytoprotective role by preventing cell lysis following immune attack by the membrane attack complex by disrupting formation of the complex. This Mus musculus (Mouse) protein is Stress-70 protein, mitochondrial.